The sequence spans 524 residues: Bifunctional purine biosynthesis protein PurH (524 aa).

Positions 1–145 constitute an MGS-like domain; the sequence is MIKQALLSVS…KNHRDVTVIV (145 aa).

The protein belongs to the PurH family.

The catalysed reaction is (6R)-10-formyltetrahydrofolate + 5-amino-1-(5-phospho-beta-D-ribosyl)imidazole-4-carboxamide = 5-formamido-1-(5-phospho-D-ribosyl)imidazole-4-carboxamide + (6S)-5,6,7,8-tetrahydrofolate. It catalyses the reaction IMP + H2O = 5-formamido-1-(5-phospho-D-ribosyl)imidazole-4-carboxamide. Its pathway is purine metabolism; IMP biosynthesis via de novo pathway; 5-formamido-1-(5-phospho-D-ribosyl)imidazole-4-carboxamide from 5-amino-1-(5-phospho-D-ribosyl)imidazole-4-carboxamide (10-formyl THF route): step 1/1. It participates in purine metabolism; IMP biosynthesis via de novo pathway; IMP from 5-formamido-1-(5-phospho-D-ribosyl)imidazole-4-carboxamide: step 1/1. In Cupriavidus taiwanensis (strain DSM 17343 / BCRC 17206 / CCUG 44338 / CIP 107171 / LMG 19424 / R1) (Ralstonia taiwanensis (strain LMG 19424)), this protein is Bifunctional purine biosynthesis protein PurH.